Here is a 471-residue protein sequence, read N- to C-terminus: Putative multidrug resistance protein MdtD (471 aa).

Helical transmembrane passes span 12–32 (LWIV…VNTA), 49–69 (MVVV…GWLA), 77–97 (IFFT…WSST), 102–124 (VLAR…LTVM), 138–158 (FVTL…GILV), 165–185 (WIFL…LMLM), 197–217 (LSGF…LDGS), 222–242 (LSPL…ALYL), 263–283 (FSLG…LPFM), 286–306 (VFLQ…MIPM), 342–362 (LLFM…VLFL), 396–416 (MIMQ…LGMF), and 431–451 (VFMY…LIFA).

Belongs to the major facilitator superfamily. TCR/Tet family.

The protein resides in the cell inner membrane. The sequence is that of Putative multidrug resistance protein MdtD from Citrobacter koseri (strain ATCC BAA-895 / CDC 4225-83 / SGSC4696).